The chain runs to 154 residues: MLEAYEKAEPGPELEVTDRVVVSFDDRKKSRHRVTTERGVELGWFLERGLVLVDGEILKCTDGTFVRVCAADESVSDVHSDNTLLLTRAAYHLGNRHVPLEVGAGYLRYQHDHVLDDMVRGLGLHVAAARAPFNPENGAYHGTGGHHHHHHDHE.

Residues 135 to 154 (PENGAYHGTGGHHHHHHDHE) form a disordered region. Residues 144 to 154 (GGHHHHHHDHE) are compositionally biased toward basic residues.

It belongs to the UreE family.

It localises to the cytoplasm. In terms of biological role, involved in urease metallocenter assembly. Binds nickel. Probably functions as a nickel donor during metallocenter assembly. This is Urease accessory protein UreE from Teredinibacter turnerae (strain ATCC 39867 / T7901).